Reading from the N-terminus, the 241-residue chain is Octanoyltransferase (241 aa).

One can recognise a BPL/LPL catalytic domain in the interval A38–L227. Residues R85–H92, A157–G159, and G170–A172 contribute to the substrate site. The active-site Acyl-thioester intermediate is the C188.

Belongs to the LipB family.

It localises to the cytoplasm. It catalyses the reaction octanoyl-[ACP] + L-lysyl-[protein] = N(6)-octanoyl-L-lysyl-[protein] + holo-[ACP] + H(+). Its pathway is protein modification; protein lipoylation via endogenous pathway; protein N(6)-(lipoyl)lysine from octanoyl-[acyl-carrier-protein]: step 1/2. Functionally, catalyzes the transfer of endogenously produced octanoic acid from octanoyl-acyl-carrier-protein onto the lipoyl domains of lipoate-dependent enzymes. Lipoyl-ACP can also act as a substrate although octanoyl-ACP is likely to be the physiological substrate. The polypeptide is Octanoyltransferase (Mycobacterium ulcerans (strain Agy99)).